Reading from the N-terminus, the 80-residue chain is Large ribosomal subunit protein eL38 (80 aa).

Belongs to the eukaryotic ribosomal protein eL38 family. Component of the large ribosomal subunit (LSU). Mature N.crassa ribosomes consist of a small (40S) and a large (60S) subunit. The 40S small subunit contains 1 molecule of ribosomal RNA (18S rRNA) and at least 32 different proteins. The large 60S subunit contains 3 rRNA molecules (26S, 5.8S and 5S rRNA) and at least 42 different proteins.

The protein localises to the cytoplasm. Functionally, component of the ribosome, a large ribonucleoprotein complex responsible for the synthesis of proteins in the cell. The small ribosomal subunit (SSU) binds messenger RNAs (mRNAs) and translates the encoded message by selecting cognate aminoacyl-transfer RNA (tRNA) molecules. The large subunit (LSU) contains the ribosomal catalytic site termed the peptidyl transferase center (PTC), which catalyzes the formation of peptide bonds, thereby polymerizing the amino acids delivered by tRNAs into a polypeptide chain. The nascent polypeptides leave the ribosome through a tunnel in the LSU and interact with protein factors that function in enzymatic processing, targeting, and the membrane insertion of nascent chains at the exit of the ribosomal tunnel. This chain is Large ribosomal subunit protein eL38 (rpl-38), found in Neurospora crassa (strain ATCC 24698 / 74-OR23-1A / CBS 708.71 / DSM 1257 / FGSC 987).